The primary structure comprises 322 residues: Cytochrome c biogenesis protein CcsA (322 aa).

6 helical membrane passes run 9 to 29, 44 to 64, 143 to 163, 226 to 246, 259 to 276, and 289 to 309; these read ILTH…LITL, GMIV…ASSG, MLLS…ILII, VISL…VWAN, ETWA…LHSR, and IASI…LLGI.

It belongs to the CcmF/CycK/Ccl1/NrfE/CcsA family. As to quaternary structure, may interact with Ccs1.

It is found in the plastid. It localises to the chloroplast thylakoid membrane. Functionally, required during biogenesis of c-type cytochromes (cytochrome c6 and cytochrome f) at the step of heme attachment. This chain is Cytochrome c biogenesis protein CcsA, found in Triticum aestivum (Wheat).